The sequence spans 472 residues: Adenosylhomocysteinase (472 aa).

Substrate is bound by residues threonine 64, aspartate 138, and glutamate 198. 199 to 201 (TTT) lines the NAD(+) pocket. Residues lysine 228 and aspartate 232 each coordinate substrate. NAD(+) is bound by residues asparagine 233, 262 to 267 (GFGDVG), glutamate 285, asparagine 320, 341 to 343 (IGH), and asparagine 386.

Belongs to the adenosylhomocysteinase family. NAD(+) serves as cofactor.

It is found in the cytoplasm. It catalyses the reaction S-adenosyl-L-homocysteine + H2O = L-homocysteine + adenosine. It participates in amino-acid biosynthesis; L-homocysteine biosynthesis; L-homocysteine from S-adenosyl-L-homocysteine: step 1/1. In terms of biological role, may play a key role in the regulation of the intracellular concentration of adenosylhomocysteine. The polypeptide is Adenosylhomocysteinase (Prochlorococcus marinus (strain MIT 9215)).